Reading from the N-terminus, the 725-residue chain is Protein ECM27 (725 aa).

The next 12 helical transmembrane spans lie at 21–41, 119–139, 157–177, 178–198, 397–417, 439–459, 470–490, 526–546, 559–579, 621–641, 668–688, and 704–724; these read VTFI…LGIC, VLGA…IIMS, LLFS…NQVT, VLNC…KLTF, ISDA…KLSC, LPII…CSIL, LVYL…TAFI, IQII…SLLA, ILGL…NSVG, LNSM…IGAF, FIVS…FFGG, and GISM…LELF.

It belongs to the Ca(2+):cation antiporter (CaCA) (TC 2.A.19) family.

It is found in the membrane. This Saccharomyces cerevisiae (strain ATCC 204508 / S288c) (Baker's yeast) protein is Protein ECM27 (ECM27).